We begin with the raw amino-acid sequence, 306 residues long: tRNA (guanine-N(7)-)-methyltransferase (306 aa).

The segment covering Met1–Ala19 has biased composition (polar residues). The segment at Met1–Glu65 is disordered. Residues Gly121, Glu144–Ile145, Asn180–Ala181, and Cys200 contribute to the S-adenosyl-L-methionine site. Asp203 is an active-site residue. S-adenosyl-L-methionine is bound at residue Thr278–Glu280.

Belongs to the class I-like SAM-binding methyltransferase superfamily. TrmB family. In terms of assembly, forms a complex with TRM82.

It localises to the nucleus. The enzyme catalyses guanosine(46) in tRNA + S-adenosyl-L-methionine = N(7)-methylguanosine(46) in tRNA + S-adenosyl-L-homocysteine. It participates in tRNA modification; N(7)-methylguanine-tRNA biosynthesis. In terms of biological role, catalyzes the formation of N(7)-methylguanine at position 46 (m7G46) in tRNA. The polypeptide is tRNA (guanine-N(7)-)-methyltransferase (Lodderomyces elongisporus (strain ATCC 11503 / CBS 2605 / JCM 1781 / NBRC 1676 / NRRL YB-4239) (Yeast)).